A 308-amino-acid polypeptide reads, in one-letter code: Shikimate kinase 1, chloroplastic (308 aa).

A chloroplast-targeting transit peptide spans 1 to 62 (MEAGVGLALQ…RGSKPVAPLR (62 aa)). 103 to 110 (GMMGSGKS) contributes to the ATP binding site. Ser110 contributes to the Mg(2+) binding site. The substrate site is built by Asp128, Arg153, and Gly175. ATP is bound at residue Arg214.

This sequence belongs to the shikimate kinase family. The cofactor is Mg(2+). Expressed in panicles.

Its subcellular location is the plastid. It is found in the chloroplast. It catalyses the reaction shikimate + ATP = 3-phosphoshikimate + ADP + H(+). It functions in the pathway metabolic intermediate biosynthesis; chorismate biosynthesis; chorismate from D-erythrose 4-phosphate and phosphoenolpyruvate: step 5/7. Its function is as follows. Catalyzes the specific phosphorylation of the 3-hydroxyl group of shikimic acid using ATP as a cosubstrate. The polypeptide is Shikimate kinase 1, chloroplastic (SK1) (Oryza sativa subsp. japonica (Rice)).